The chain runs to 86 residues: Hepcidin-1 (86 aa).

Residues 1 to 22 form the signal peptide; it reads MKAFSVAVVLVIACMFILESTA. Residues 23–59 constitute a propeptide that is removed on maturation; sequence VPFSEVRTEEVGSFDSPVGEHQQPGGESMHLPEPFRF. 4 cysteine pairs are disulfide-bonded: Cys68/Cys84, Cys71/Cys74, Cys72/Cys80, and Cys75/Cys83.

This sequence belongs to the hepcidin family.

It localises to the secreted. Functionally, seems to act as a signaling molecule involved in the maintenance of iron homeostasis. Seems to be required in conjunction with HFE to regulate both intestinal iron absorption and iron storage in macrophages. May also have antimicrobial activity. In Salmo salar (Atlantic salmon), this protein is Hepcidin-1 (hamp1).